Here is a 529-residue protein sequence, read N- to C-terminus: Probable feruloyl esterase B-1 (529 aa).

The N-terminal stretch at 1–19 is a signal peptide; the sequence is MKISYFFVASLSYVSVARA. 2 disulfide bridges follow: cysteine 27–cysteine 75 and cysteine 63–cysteine 114. N-linked (GlcNAc...) asparagine glycans are attached at residues asparagine 53, asparagine 64, asparagine 85, asparagine 98, and asparagine 138. Intrachain disulfides connect cysteine 187-cysteine 445, cysteine 256-cysteine 273, cysteine 282-cysteine 295, and cysteine 505-cysteine 527. The active-site Acyl-ester intermediate is the serine 188. Asparagine 233 carries N-linked (GlcNAc...) asparagine glycosylation. Residues aspartate 257, aspartate 260, alanine 262, aspartate 264, and leucine 266 each contribute to the Ca(2+) site. N-linked (GlcNAc...) asparagine glycans are attached at residues asparagine 286, asparagine 290, and asparagine 354. Active-site charge relay system residues include aspartate 404 and histidine 444.

The protein belongs to the tannase family.

Its subcellular location is the secreted. The catalysed reaction is feruloyl-polysaccharide + H2O = ferulate + polysaccharide.. In terms of biological role, involved in degradation of plant cell walls. Hydrolyzes the feruloyl-arabinose ester bond in arabinoxylans as well as the feruloyl-galactose and feruloyl-arabinose ester bonds in pectin. The sequence is that of Probable feruloyl esterase B-1 (faeB-1) from Aspergillus terreus (strain NIH 2624 / FGSC A1156).